We begin with the raw amino-acid sequence, 464 residues long: Propanal dehydrogenase (CoA-propanoylating) (464 aa).

Residues 1-18 (MNTSELETLIRTILSEQL) are targets protein to the BMC.

This sequence belongs to the EutE/PduP family. In terms of assembly, interacts with BMC shell proteins PduA and PduJ, which target this protein to BMC. Interacts with PduQ, probably via the N-terminus of PduQ. Interacts with PduK, probably with its BMC-containing N-terminus.

It is found in the bacterial microcompartment. It carries out the reaction propanal + NAD(+) + CoA = propanoyl-CoA + NADH + H(+). It functions in the pathway polyol metabolism; 1,2-propanediol degradation. Its function is as follows. A CoA-acylating aldehyde dehydrogenase required for optimal 1,2-propanediol (1,2-PD) degradation. Optimizes growth in the bacterial microcompartment (BMC) dedicated to 1,2-PD degradation by minimizing propionaldehyde toxicity. Directly targeted to the BMC. NAD(+) and NADH are regenerated internally within the Pdu BMC by the PduP and PduQ enzymes, which reduce NAD(+) and oxidize NADH respectively, although there must also be cofactor transport across the BMC. In terms of biological role, the 1,2-PD-specific bacterial microcompartment (BMC) concentrates low levels of 1,2-PD catabolic enzymes, concentrates volatile reaction intermediates thus enhancing pathway flux and keeps the level of toxic, mutagenic propionaldehyde low. This Salmonella typhimurium (strain LT2 / SGSC1412 / ATCC 700720) protein is Propanal dehydrogenase (CoA-propanoylating).